The chain runs to 206 residues: Small ribosomal subunit protein uS4 (206 aa).

The region spanning 96–156 (GRLDNVVYRM…EKAKKQSRVK (61 aa)) is the S4 RNA-binding domain.

Belongs to the universal ribosomal protein uS4 family. In terms of assembly, part of the 30S ribosomal subunit. Contacts protein S5. The interaction surface between S4 and S5 is involved in control of translational fidelity.

Functionally, one of the primary rRNA binding proteins, it binds directly to 16S rRNA where it nucleates assembly of the body of the 30S subunit. With S5 and S12 plays an important role in translational accuracy. The chain is Small ribosomal subunit protein uS4 from Escherichia fergusonii (strain ATCC 35469 / DSM 13698 / CCUG 18766 / IAM 14443 / JCM 21226 / LMG 7866 / NBRC 102419 / NCTC 12128 / CDC 0568-73).